A 479-amino-acid polypeptide reads, in one-letter code: Aspartyl/glutamyl-tRNA(Asn/Gln) amidotransferase subunit B (479 aa).

It belongs to the GatB/GatE family. GatB subfamily. Heterotrimer of A, B and C subunits.

The enzyme catalyses L-glutamyl-tRNA(Gln) + L-glutamine + ATP + H2O = L-glutaminyl-tRNA(Gln) + L-glutamate + ADP + phosphate + H(+). The catalysed reaction is L-aspartyl-tRNA(Asn) + L-glutamine + ATP + H2O = L-asparaginyl-tRNA(Asn) + L-glutamate + ADP + phosphate + 2 H(+). Its function is as follows. Allows the formation of correctly charged Asn-tRNA(Asn) or Gln-tRNA(Gln) through the transamidation of misacylated Asp-tRNA(Asn) or Glu-tRNA(Gln) in organisms which lack either or both of asparaginyl-tRNA or glutaminyl-tRNA synthetases. The reaction takes place in the presence of glutamine and ATP through an activated phospho-Asp-tRNA(Asn) or phospho-Glu-tRNA(Gln). In Geobacter sp. (strain M21), this protein is Aspartyl/glutamyl-tRNA(Asn/Gln) amidotransferase subunit B.